We begin with the raw amino-acid sequence, 1079 residues long: Electrogenic sodium bicarbonate cotransporter 1 (1079 aa).

Positions 1-62 (MEDEAVLDRG…EKKEKERISE (62 aa)) are required for interaction with AHCYL1. Topologically, residues 1-466 (MEDEAVLDRG…FASDFYDALN (466 aa)) are cytoplasmic. Residue Glu-21 is modified to Phosphoserine. The residue at position 30 (Tyr-30) is a Phosphotyrosine. Residues 39–52 (YRRRRRHKRKAGHK) are compositionally biased toward basic residues. The interval 39 to 78 (YRRRRRHKRKAGHKEKKEKERISENYSDKSDVENADESSS) is disordered. The span at 53–70 (EKKEKERISENYSDKSDV) shows a compositional bias: basic and acidic residues. Phosphoserine is present on residues Ser-61, Ser-65, Ser-68, Ser-223, Ser-232, Ser-233, and Ser-245. Residues 235–266 (SRMFSNPDNGSPAMTHRNLTSSSLNDISDKPE) form a disordered region. Residues Thr-249 and Thr-254 each carry the phosphothreonine modification. Residues 251–260 (RNLTSSSLND) are compositionally biased toward polar residues. 3 positions are modified to phosphoserine: Ser-256, Ser-257, and Ser-262. Residues 467-491 (IQALSAILFIYLATVTNAITFGGLL) form a helical membrane-spanning segment. At 492–501 (GDATDNMQGV) the chain is on the extracellular side. A helical transmembrane segment spans residues 502-520 (LESFLGTAVSGAIFCLFAG). Position 521 (Gln-521) is a topological domain, cytoplasmic. Residues 522–542 (PLTILSSTGPVLVFERLLFNF) traverse the membrane as a discontinuously helical segment. The Extracellular portion of the chain corresponds to 543–550 (SKDHNFDY). A helical transmembrane segment spans residues 551-571 (LEFRLWIGLWSAFMCLVLVAT). The Cytoplasmic segment spans residues 572-585 (DASFLVQYFTRFTE). A helical membrane pass occupies residues 586–609 (EGFSSLISFIFIYDAFKKMIKLAD). The Extracellular segment spans residues 610 to 692 (YYPINSDFKV…GNNCDFVPDI (83 aa)). A helical membrane pass occupies residues 693–710 (TLMSFILFLGTYTSSMAM). The Cytoplasmic segment spans residues 711–725 (KKFKTSRYFPTTARK). Residues 726 to 745 (LISDFAIILSILIFCVIDAL) form a helical membrane-spanning segment. The Extracellular portion of the chain corresponds to 746-779 (VGVDTPKLIVPSEFKPTSPNRGWFVPPFGGNPWW). The interval 748–779 (VDTPKLIVPSEFKPTSPNRGWFVPPFGGNPWW) is interaction with CA4. The helical transmembrane segment at 780-807 (VCLAAAIPALLVTILIFMDQQITAVIVN) threads the bilayer. Topologically, residues 808 to 819 (RKEHKLKKGAGY) are cytoplasmic. The helical transmembrane segment at 820 to 836 (HLDLFWVAILMVVCSFM) threads the bilayer. A topological domain (extracellular) is located at residue Ala-837. The chain crosses the membrane as a discontinuously helical span at residues 838-855 (LPWYVAATVISIAHIDSL). Residues 856–877 (KMETETSAPGEQPKFLGVREQR) are Cytoplasmic-facing. The helical transmembrane segment at 878–894 (VTGTLVFILTGLSVFMA) threads the bilayer. Residues 895–901 (PILKFIP) lie on the Extracellular side of the membrane. Residues 902 to 918 (MPVLYGVFLYMGVASLN) form a helical membrane-spanning segment. Topologically, residues 919-960 (GVQFMDRLKLLLMPLKHQPDFIYLRHVPLRRVHLFTFLQVLC) are cytoplasmic. Positions 961–986 (LALLWILKSTVAAIIFPVMILALVAV) form an intramembrane region, discontinuously helical. Residues 987-1079 (RKGMDYLFSQ…STFLERHTSC (93 aa)) lie on the Cytoplasmic side of the membrane. The segment at 1002–1004 (LDD) is CA2-binding. The disordered stretch occupies residues 1012-1079 (KKKEDEKKKK…STFLERHTSC (68 aa)). Ser-1026 and Ser-1029 each carry phosphoserine. Positions 1030–1033 (DNDD) are CA2-binding. Phosphoserine occurs at positions 1034 and 1044. Residues 1057-1059 (FLS) form a required for basolateral targeting region. Positions 1062 to 1079 (KPLDRERSSTFLERHTSC) are enriched in basic and acidic residues. Ser-1069 carries the phosphoserine modification.

It belongs to the anion exchanger (TC 2.A.31) family. In terms of assembly, homodimer. Interacts with CA2/carbonic anhydrase 2 and CA4/carbonic anhydrase 4 which may regulate transporter activity. Isoform 1 but not isoform 2 interacts with AHCYL1 (via PEST domain when phosphorylated); the interaction increases SLC4A4 isoform 1 activity. Interacts with AHCYL2. Phosphorylation of Ser-1026 by PKA increases the binding of CA2 and changes the Na(+):HCO3(-) stoichiometry of the transporter from 3:1 to 2:1. Phosphorylated in presence of STK39 and dephosphorylated in presence of PP1 phosphatase; phosphorylation seems to inhibit SLC4A4 activity. Post-translationally, N-glycosylated. May not be necessary for the transporter basic functions. In terms of tissue distribution, isoform 1 is specifically expressed in pancreatic ducts and acini. Also expressed in parotid acinar cells and in the colonic crypts.

It is found in the basolateral cell membrane. Its subcellular location is the cell membrane. The enzyme catalyses 2 hydrogencarbonate(out) + Na(+)(out) = 2 hydrogencarbonate(in) + Na(+)(in). It catalyses the reaction 3 hydrogencarbonate(out) + Na(+)(out) = 3 hydrogencarbonate(in) + Na(+)(in). Activated by cyclic AMP. Electrogenic sodium/bicarbonate cotransporter with a Na(+):HCO3(-) stoichiometry varying from 1:2 to 1:3. May regulate bicarbonate influx/efflux at the basolateral membrane of cells and regulate intracellular pH. The polypeptide is Electrogenic sodium bicarbonate cotransporter 1 (Slc4a4) (Mus musculus (Mouse)).